Consider the following 162-residue polypeptide: UPF0303 protein Arad_3071 (162 aa).

It belongs to the UPF0303 family.

The chain is UPF0303 protein Arad_3071 from Rhizobium rhizogenes (strain K84 / ATCC BAA-868) (Agrobacterium radiobacter).